A 211-amino-acid chain; its full sequence is Endonuclease III (211 aa).

Residues Arg-108–Asn-127 form the HhH domain. Residues Cys-187, Cys-194, Cys-197, and Cys-203 each contribute to the [4Fe-4S] cluster site.

The protein belongs to the Nth/MutY family. Requires [4Fe-4S] cluster as cofactor.

The enzyme catalyses 2'-deoxyribonucleotide-(2'-deoxyribose 5'-phosphate)-2'-deoxyribonucleotide-DNA = a 3'-end 2'-deoxyribonucleotide-(2,3-dehydro-2,3-deoxyribose 5'-phosphate)-DNA + a 5'-end 5'-phospho-2'-deoxyribonucleoside-DNA + H(+). In terms of biological role, DNA repair enzyme that has both DNA N-glycosylase activity and AP-lyase activity. The DNA N-glycosylase activity releases various damaged pyrimidines from DNA by cleaving the N-glycosidic bond, leaving an AP (apurinic/apyrimidinic) site. The AP-lyase activity cleaves the phosphodiester bond 3' to the AP site by a beta-elimination, leaving a 3'-terminal unsaturated sugar and a product with a terminal 5'-phosphate. The protein is Endonuclease III of Escherichia coli O6:H1 (strain CFT073 / ATCC 700928 / UPEC).